The following is a 420-amino-acid chain: Serine--tRNA ligase (420 aa).

228 to 230 (TAE) is a binding site for L-serine. ATP is bound at residue 259–261 (RSE). Glu-282 serves as a coordination point for L-serine. An ATP-binding site is contributed by 346 to 349 (EISS). Ser-382 is an L-serine binding site.

This sequence belongs to the class-II aminoacyl-tRNA synthetase family. Type-1 seryl-tRNA synthetase subfamily. As to quaternary structure, homodimer. The tRNA molecule binds across the dimer.

It localises to the cytoplasm. The enzyme catalyses tRNA(Ser) + L-serine + ATP = L-seryl-tRNA(Ser) + AMP + diphosphate + H(+). It catalyses the reaction tRNA(Sec) + L-serine + ATP = L-seryl-tRNA(Sec) + AMP + diphosphate + H(+). The protein operates within aminoacyl-tRNA biosynthesis; selenocysteinyl-tRNA(Sec) biosynthesis; L-seryl-tRNA(Sec) from L-serine and tRNA(Sec): step 1/1. Catalyzes the attachment of serine to tRNA(Ser). Is also able to aminoacylate tRNA(Sec) with serine, to form the misacylated tRNA L-seryl-tRNA(Sec), which will be further converted into selenocysteinyl-tRNA(Sec). This chain is Serine--tRNA ligase, found in Mycoplasmoides gallisepticum (strain R(low / passage 15 / clone 2)) (Mycoplasma gallisepticum).